The chain runs to 402 residues: Candidapepsin-1 (402 aa).

Positions 1-25 form a signal peptide, or 18, or 21; it reads MVAIVTLTRQVLLTIALALFAQGAA. A propeptide spans 26-62 (activation peptide); it reads IPEEAAKRDDNPGFVALDFDVLRKPLNLTEALLREKR. N-linked (GlcNAc...) asparagine glycosylation occurs at N52. The region spanning 76 to 389 is the Peptidase A1 domain; sequence YASKVSVGSN…NLDANTISIA (314 aa). The active site involves D94. An intrachain disulfide couples C109 to C115. D282 is an active-site residue. Cysteines 320 and 354 form a disulfide.

It belongs to the peptidase A1 family. O-glycosylated.

It localises to the secreted. The catalysed reaction is Preferential cleavage at the carboxyl of hydrophobic amino acids, but fails to cleave 15-Leu-|-Tyr-16, 16-Tyr-|-Leu-17 and 24-Phe-|-Phe-25 of insulin B chain. Activates trypsinogen, and degrades keratin.. In Candida parapsilosis (Yeast), this protein is Candidapepsin-1 (SAPP1).